Reading from the N-terminus, the 930-residue chain is Protein ARABIDILLO 1 (930 aa).

The Nuclear localization signal signature appears at 3–8; the sequence is RRVRRK. The F-box domain maps to 44-90; that stretch reads FVDWISLPYDTVLQLFTCLNYRDRASLASTCKTWRCLGASSCLWTSL. ARM repeat units follow at residues 172–212, 244–285, 379–418, 428–467, 469–508, 510–552, 554–594, 600–639, 641–683, 685–724, 726–766, 790–831, and 835–875; these read RITS…KHCP, TSNI…TSSQ, PEGL…TFVV, CGRA…NLSV, ANIA…NLSV, EEHK…NLAA, DKCS…NLAA, NNNA…NLSF, DKNR…GLSV, EANS…NLAF, PGNA…YMFD, LDGA…QVTE, and IQEA…QFTI.

It belongs to the beta-catenin family. Interacts with SNL1. Interacts with MYB53, MYB92 and MYB93. As to expression, expressed ubiquitously, with higher levels in root tip, pericycle and vasculature.

The protein resides in the nucleus. In terms of biological role, promotes lateral root initiation and development, independently of auxin (IAA) and abscisis acid (ABA). This is Protein ARABIDILLO 1 (FBX5) from Arabidopsis thaliana (Mouse-ear cress).